The primary structure comprises 184 residues: MEEQKQTPSTPTPDTAAEAAVNAATAAPETAGADDVAAQLAALEAKAREHYDMYVRAVAEGENIRRRAQEDVSKAHKFAIENFADNLLPVMDSLQAALADGSGDIAKLREGVELTARQLSAAFERGKIVELNPVGEKFDPHRHQAISMVPSEQESNTVVTVLQRGYTIADRVLRPALVTVSAPK.

The tract at residues methionine 1–glycine 32 is disordered. A compositionally biased stretch (low complexity) spans threonine 12–glycine 32.

Belongs to the GrpE family. In terms of assembly, homodimer.

It localises to the cytoplasm. Participates actively in the response to hyperosmotic and heat shock by preventing the aggregation of stress-denatured proteins, in association with DnaK and GrpE. It is the nucleotide exchange factor for DnaK and may function as a thermosensor. Unfolded proteins bind initially to DnaJ; upon interaction with the DnaJ-bound protein, DnaK hydrolyzes its bound ATP, resulting in the formation of a stable complex. GrpE releases ADP from DnaK; ATP binding to DnaK triggers the release of the substrate protein, thus completing the reaction cycle. Several rounds of ATP-dependent interactions between DnaJ, DnaK and GrpE are required for fully efficient folding. This is Protein GrpE from Cupriavidus pinatubonensis (strain JMP 134 / LMG 1197) (Cupriavidus necator (strain JMP 134)).